We begin with the raw amino-acid sequence, 338 residues long: Secretory carrier-associated membrane protein 1 (338 aa).

Positions 1–64 are disordered; sequence MSDFDSNPFA…NVPNTQPAIM (64 aa). An N-acetylserine modification is found at S2. S2 carries the post-translational modification Phosphoserine. The Cytoplasmic portion of the chain corresponds to 2–155; it reads SDFDSNPFAD…QKTVKLMYYL (154 aa). T45 carries the phosphothreonine modification. A helical membrane pass occupies residues 156-176; that stretch reads WMFHAVTLFLNIFGCLAWFCV. The Lumenal segment spans residues 177–181; sequence DSSRA. Residues 182 to 202 form a helical membrane-spanning segment; the sequence is VDFGLSILWFLLFTPCSFVCW. Residues 203–218 lie on the Cytoplasmic side of the membrane; it reads YRPLYGAFRSDSSFRF. Residues 219 to 239 traverse the membrane as a helical segment; sequence FVFFFVYICQFAVHVLQAAGF. Residues 240–261 lie on the Lumenal side of the membrane; sequence HNWGNCGWISSLTGLNKNIPVG. A helical membrane pass occupies residues 262-282; that stretch reads IMMIIIAALFTASAVISLVMF. Residues 283 to 338 are Cytoplasmic-facing; that stretch reads KKVHGLYRTTGASFEKAQQEFATGVMSNKTVQTAAANAASTAATSAAQNAFKGNQM.

Belongs to the SCAMP family. As to quaternary structure, interacts with SYNRG, ITSN1 and SLC9A7.

It localises to the golgi apparatus. Its subcellular location is the trans-Golgi network membrane. The protein resides in the recycling endosome membrane. In terms of biological role, functions in post-Golgi recycling pathways. Acts as a recycling carrier to the cell surface. This chain is Secretory carrier-associated membrane protein 1 (Scamp1), found in Mus musculus (Mouse).